The following is a 375-amino-acid chain: Beta sliding clamp (375 aa).

Belongs to the beta sliding clamp family. Forms a ring-shaped head-to-tail homodimer around DNA which binds and tethers DNA polymerases and other proteins to the DNA. The DNA replisome complex has a single clamp-loading complex (3 tau and 1 each of delta, delta', psi and chi subunits) which binds 3 Pol III cores (1 core on the leading strand and 2 on the lagging strand) each with a beta sliding clamp dimer. Additional proteins in the replisome are other copies of gamma, psi and chi, Ssb, DNA helicase and RNA primase.

Its subcellular location is the cytoplasm. In terms of biological role, confers DNA tethering and processivity to DNA polymerases and other proteins. Acts as a clamp, forming a ring around DNA (a reaction catalyzed by the clamp-loading complex) which diffuses in an ATP-independent manner freely and bidirectionally along dsDNA. Initially characterized for its ability to contact the catalytic subunit of DNA polymerase III (Pol III), a complex, multichain enzyme responsible for most of the replicative synthesis in bacteria; Pol III exhibits 3'-5' exonuclease proofreading activity. The beta chain is required for initiation of replication as well as for processivity of DNA replication. This chain is Beta sliding clamp (dnaN), found in Mycoplasma capricolum subsp. capricolum (strain California kid / ATCC 27343 / NCTC 10154).